Here is a 606-residue protein sequence, read N- to C-terminus: Probable potassium transport system protein Kup (606 aa).

12 helical membrane-spanning segments follow: residues 18 to 38 (GLVF…VFAL), 46 to 66 (VFGI…AEYA), 97 to 117 (LTFV…DGVI), 138 to 158 (GLHQ…LFVF), 166 to 186 (VAGA…LSGA), 212 to 232 (GLAG…GEAL), 247 to 267 (AWYI…AFII), 287 to 307 (LYIP…QAMI), 339 to 359 (IYIG…MLVF), 368 to 388 (AYGL…ILIL), 395 to 415 (WKAV…TACL), and 418 to 438 (LPHG…TILV).

Belongs to the HAK/KUP transporter (TC 2.A.72) family.

The protein localises to the cell inner membrane. The enzyme catalyses K(+)(in) + H(+)(in) = K(+)(out) + H(+)(out). In terms of biological role, transport of potassium into the cell. Likely operates as a K(+):H(+) symporter. This Trichlorobacter lovleyi (strain ATCC BAA-1151 / DSM 17278 / SZ) (Geobacter lovleyi) protein is Probable potassium transport system protein Kup.